We begin with the raw amino-acid sequence, 660 residues long: Phosphatidylinositol-3-phosphate phosphatase MTMR7 (660 aa).

The Myotubularin phosphatase domain maps to 126–504; the sequence is GWLLVDLSEE…FTYKFWNGMY (379 aa). A 1,2-diacyl-sn-glycero-3-phospho-(1D-myo-inositol-3-phosphate) is bound by residues N250, N275, and I276. Residue C338 is the Phosphocysteine intermediate of the active site. A 1,2-diacyl-sn-glycero-3-phospho-(1D-myo-inositol-3-phosphate)-binding residues include S339, D340, G341, W342, D343, R344, and R384. The stretch at 514–548 forms a coiled coil; the sequence is RQSVTDYLMAVKEESQQLEEELESLEERLEKIQKV. Residues 550-660 form a disordered region; the sequence is LHGTKVKSKQ…DSDEAVFLTA (111 aa). A compositionally biased stretch (polar residues) spans 566 to 596; the sequence is SGFSTSDHSTANTPQDYSGNSKSFPSRSPSQ. T578 carries the post-translational modification Phosphothreonine. The span at 641–653 shows a compositional bias: basic and acidic residues; sequence APSEDSGKDRDSD.

Belongs to the protein-tyrosine phosphatase family. Non-receptor class myotubularin subfamily. In terms of assembly, heterodimer (via C-terminus) with MTMR9 (via coiled coil domain); the interaction enhances MTMR7 catalytic activity. Does not homodimerize. Interacts with RAB1B (in GDP-bound form). Highly expressed in brain (at protein level). Expressed at low levels in liver, kidney and testis.

It is found in the cytoplasm. The protein localises to the endomembrane system. The catalysed reaction is a 1,2-diacyl-sn-glycero-3-phospho-(1D-myo-inositol-3-phosphate) + H2O = a 1,2-diacyl-sn-glycero-3-phospho-(1D-myo-inositol) + phosphate. It carries out the reaction 1D-myo-inositol 1,3-bisphosphate + H2O = 1D-myo-inositol 1-phosphate + phosphate. Its activity is regulated as follows. Interaction with MTMR9 increases phosphatase activity. In terms of biological role, lipid phosphatase that specifically dephosphorylates the D-3 position of phosphatidylinositol 3-phosphate (PtdIns(3)P) and inositol 1,3-bisphosphate (Ins(1,3)P2). The polypeptide is Phosphatidylinositol-3-phosphate phosphatase MTMR7 (Mus musculus (Mouse)).